Reading from the N-terminus, the 381-residue chain is Succinyl-diaminopimelate desuccinylase (381 aa).

His68 provides a ligand contact to Zn(2+). Asp70 is an active-site residue. Asp101 contacts Zn(2+). Glu135 acts as the Proton acceptor in catalysis. The Zn(2+) site is built by Glu136, Glu164, and His350.

Belongs to the peptidase M20A family. DapE subfamily. Homodimer. The cofactor is Zn(2+). Co(2+) is required as a cofactor.

The enzyme catalyses N-succinyl-(2S,6S)-2,6-diaminopimelate + H2O = (2S,6S)-2,6-diaminopimelate + succinate. The protein operates within amino-acid biosynthesis; L-lysine biosynthesis via DAP pathway; LL-2,6-diaminopimelate from (S)-tetrahydrodipicolinate (succinylase route): step 3/3. Functionally, catalyzes the hydrolysis of N-succinyl-L,L-diaminopimelic acid (SDAP), forming succinate and LL-2,6-diaminopimelate (DAP), an intermediate involved in the bacterial biosynthesis of lysine and meso-diaminopimelic acid, an essential component of bacterial cell walls. The sequence is that of Succinyl-diaminopimelate desuccinylase from Neisseria meningitidis serogroup A / serotype 4A (strain DSM 15465 / Z2491).